The primary structure comprises 249 residues: Small ribosomal subunit protein uS3 (249 aa).

One can recognise a KH type-2 domain in the interval 23-94 (LNEFFTRELS…TVELYAEKVQ (72 aa)). 4 positions are modified to phosphoserine: S32, S37, S106, and S141.

This sequence belongs to the universal ribosomal protein uS3 family. Component of the small ribosomal subunit (SSU). Mature yeast ribosomes consist of a small (40S) and a large (60S) subunit. The 40S small subunit contains 1 molecule of ribosomal RNA (18S rRNA) and at least 33 different proteins. The large 60S subunit contains 3 rRNA molecules (25S, 5.8S and 5S rRNA) and at least 46 different proteins.

It localises to the cytoplasm. Functionally, component of the ribosome, a large ribonucleoprotein complex responsible for the synthesis of proteins in the cell. The small ribosomal subunit (SSU) binds messenger RNAs (mRNAs) and translates the encoded message by selecting cognate aminoacyl-transfer RNA (tRNA) molecules. The large subunit (LSU) contains the ribosomal catalytic site termed the peptidyl transferase center (PTC), which catalyzes the formation of peptide bonds, thereby polymerizing the amino acids delivered by tRNAs into a polypeptide chain. The nascent polypeptides leave the ribosome through a tunnel in the LSU and interact with protein factors that function in enzymatic processing, targeting, and the membrane insertion of nascent chains at the exit of the ribosomal tunnel. The sequence is that of Small ribosomal subunit protein uS3 (rps3) from Schizosaccharomyces pombe (strain 972 / ATCC 24843) (Fission yeast).